The primary structure comprises 496 residues: Probable cytosol aminopeptidase (496 aa).

2 residues coordinate Mn(2+): K262 and D267. K274 is an active-site residue. Positions 285, 344, and 346 each coordinate Mn(2+). R348 is a catalytic residue.

It belongs to the peptidase M17 family. It depends on Mn(2+) as a cofactor.

The protein localises to the cytoplasm. It catalyses the reaction Release of an N-terminal amino acid, Xaa-|-Yaa-, in which Xaa is preferably Leu, but may be other amino acids including Pro although not Arg or Lys, and Yaa may be Pro. Amino acid amides and methyl esters are also readily hydrolyzed, but rates on arylamides are exceedingly low.. It carries out the reaction Release of an N-terminal amino acid, preferentially leucine, but not glutamic or aspartic acids.. Presumably involved in the processing and regular turnover of intracellular proteins. Catalyzes the removal of unsubstituted N-terminal amino acids from various peptides. The chain is Probable cytosol aminopeptidase from Rhizobium leguminosarum bv. trifolii (strain WSM2304).